We begin with the raw amino-acid sequence, 78 residues long: Large ribosomal subunit protein bL31 (78 aa).

It belongs to the bacterial ribosomal protein bL31 family. Type A subfamily. As to quaternary structure, part of the 50S ribosomal subunit.

Its function is as follows. Binds the 23S rRNA. The chain is Large ribosomal subunit protein bL31 from Rickettsia prowazekii (strain Madrid E).